A 125-amino-acid chain; its full sequence is Glycine cleavage system H protein (125 aa).

One can recognise a Lipoyl-binding domain in the interval 22–104; sequence SYVIGITDFA…YDTGWILKLE (83 aa). N6-lipoyllysine is present on Lys63.

The protein belongs to the GcvH family. The glycine cleavage system is composed of four proteins: P, T, L and H. Requires (R)-lipoate as cofactor.

The glycine cleavage system catalyzes the degradation of glycine. The H protein shuttles the methylamine group of glycine from the P protein to the T protein. Functionally, is also involved in protein lipoylation via its role as an octanoyl/lipoyl carrier protein intermediate. This is Glycine cleavage system H protein from Listeria monocytogenes serotype 4b (strain CLIP80459).